The following is a 148-amino-acid chain: MGRGRVEMKRIENKINRQVTFSKRRAGLLKKAHEISILCDAEVSLIVFSHKGKLFEYSSESCMEKVLERYERYSYAEKQLKAPDSHVNAQTNWSMEYSRLKAKIELWERNQRHYLGEDLESISIKELQNLEQQLDTSLKHIPSRKVCK.

The MADS-box domain maps to 1-61; that stretch reads MGRGRVEMKR…GKLFEYSSES (61 aa). Residues 90-148 enclose the K-box; partial domain; sequence QTNWSMEYSRLKAKIELWERNQRHYLGEDLESISIKELQNLEQQLDTSLKHIPSRKVCK.

In terms of assembly, homodimer capable of binding to CArG-box sequences.

The protein resides in the nucleus. In terms of biological role, probable transcription factor that promotes early floral meristem identity in synergy with APETALA1, FRUITFULL and LEAFY. Is required subsequently for the transition of an inflorescence meristem into a floral meristem. Seems to be partially redundant to the function of APETALA1. The chain is Truncated transcription factor CAULIFLOWER C (CAL-C) from Brassica oleracea var. botrytis (Cauliflower).